A 440-amino-acid chain; its full sequence is Platelet-activating factor acetylhydrolase (440 aa).

The signal sequence occupies residues 1-21; the sequence is MVPLKLQALFCLLCCLPWVHP. 3 N-linked (GlcNAc...) asparagine glycosylation sites follow: Asn59, Asn75, and Asn199. Ser272 acts as the Nucleophile in catalysis. Catalysis depends on charge relay system residues Asp295 and His350.

Belongs to the AB hydrolase superfamily. Lipase family. N-glycosylated. In terms of tissue distribution, plasma.

It is found in the secreted. The protein resides in the extracellular space. It catalyses the reaction a 1-O-alkyl-2-acetyl-sn-glycero-3-phosphocholine + H2O = a 1-O-alkyl-sn-glycero-3-phosphocholine + acetate + H(+). The enzyme catalyses 1-O-decyl-2-acetyl-sn-glycero-3-phosphocholine + H2O = 1-O-decyl-sn-glycero-3-phosphocholine + acetate + H(+). It carries out the reaction 1-O-dodecyl-2-acetyl-sn-glycero-3-phosphocholine + H2O = 1-O-dodecyl-sn-glycero-3-phosphocholine + acetate + H(+). The catalysed reaction is 1-O-tetradecyl-2-acetyl-sn-glycero-3-phosphocholine + H2O = 1-O-tetradecyl-sn-glycero-3-phosphocholine + acetate + H(+). It catalyses the reaction 1-O-hexadecyl-2-acetyl-sn-glycero-3-phosphocholine + H2O = 1-O-hexadecyl-sn-glycero-3-phosphocholine + acetate + H(+). The enzyme catalyses 1-O-octadecyl-2-acetyl-sn-glycero-3-phosphocholine + H2O = 1-O-octadecyl-sn-glycero-3-phosphocholine + acetate + H(+). It carries out the reaction 1-hexadecanoyl-2-acetyl-sn-glycero-3-phosphocholine + H2O = 1-hexadecanoyl-sn-glycero-3-phosphocholine + acetate + H(+). The catalysed reaction is 1-hexadecanoyl-2-propionyl-sn-glycero-3-phosphocholine + H2O = propanoate + 1-hexadecanoyl-sn-glycero-3-phosphocholine + H(+). It catalyses the reaction 1-hexadecanoyl-2-butanoyl-sn-glycero-3-phosphocholine + H2O = butanoate + 1-hexadecanoyl-sn-glycero-3-phosphocholine + H(+). The enzyme catalyses 1-hexadecanoyl-2-pentanoyl-sn-glycero-3-phosphocholine + H2O = pentanoate + 1-hexadecanoyl-sn-glycero-3-phosphocholine + H(+). It carries out the reaction 1-hexadecanoyl-2-glutaroyl-sn-glycero-3-phosphocholine + H2O = glutarate + 1-hexadecanoyl-sn-glycero-3-phosphocholine + H(+). The catalysed reaction is 1-hexadecanoyl-2-(5-oxopentanoyl)-sn-glycero-3-phosphocholine + H2O = 5-oxopentanoate + 1-hexadecanoyl-sn-glycero-3-phosphocholine + H(+). It catalyses the reaction 1-hexadecanoyl-2-(9-oxononanoyl)-sn-glycero-3-phosphocholine + H2O = 9-oxononanoate + 1-hexadecanoyl-sn-glycero-3-phosphocholine + H(+). The enzyme catalyses 1-hexadecanoyl-2-[9-hydroperoxy-(10E-octadecenoyl)]-sn-glycero-3-phosphocholine + H2O = 9-hydroperoxy-10E-octadecenoate + 1-hexadecanoyl-sn-glycero-3-phosphocholine + H(+). It carries out the reaction 1-hexadecanoyl-2-(10-hydroperoxy-8E-octadecenoyl)-sn-glycero-3-phosphocholine + H2O = 10-hydroperoxy-(8E)-octadecenoate + 1-hexadecanoyl-sn-glycero-3-phosphocholine + H(+). Functionally, lipoprotein-associated calcium-independent phospholipase A2 involved in phospholipid catabolism during inflammatory and oxidative stress response. At the lipid-aqueous interface, hydrolyzes the ester bond of fatty acyl group attached at sn-2 position of phospholipids (phospholipase A2 activity). Specifically targets phospholipids with a short-chain fatty acyl group at sn-2 position. Can hydrolyze phospholipids with long fatty acyl chains, only if they carry oxidized functional groups. Hydrolyzes and inactivates platelet-activating factor (PAF, 1-O-alkyl-2-acetyl-sn-glycero-3-phosphocholine), a potent pro-inflammatory signaling lipid that acts through PTAFR on various innate immune cells. Hydrolyzes oxidatively truncated phospholipids carrying an aldehyde group at omega position, preventing their accumulation in lipoprotein particles and uncontrolled pro-inflammatory effects. As part of high-density lipoprotein (HDL) particles, can hydrolyze phospholipids having long-chain fatty acyl hydroperoxides at sn-2 position and protect against potential accumulation of these oxylipins in the vascular wall. Catalyzes the release from membrane phospholipids of F2-isoprostanes, lipid biomarkers of cellular oxidative damage. The sequence is that of Platelet-activating factor acetylhydrolase (Pla2g7) from Mus musculus (Mouse).